We begin with the raw amino-acid sequence, 240 residues long: Large ribosomal subunit protein uL2 (240 aa).

The disordered stretch occupies residues D199–E240. A compositionally biased stretch (basic and acidic residues) spans A221 to S231.

Belongs to the universal ribosomal protein uL2 family. Part of the 50S ribosomal subunit. Forms a bridge to the 30S subunit in the 70S ribosome.

One of the primary rRNA binding proteins. Required for association of the 30S and 50S subunits to form the 70S ribosome, for tRNA binding and peptide bond formation. It has been suggested to have peptidyltransferase activity; this is somewhat controversial. Makes several contacts with the 16S rRNA in the 70S ribosome. In Halobacterium salinarum (strain ATCC 29341 / DSM 671 / R1), this protein is Large ribosomal subunit protein uL2.